The following is a 271-amino-acid chain: 3-methyl-2-oxobutanoate hydroxymethyltransferase 2 (271 aa).

Residues Asp53 and Asp92 each contribute to the Mg(2+) site. Residues 53–54 (DS), Asp92, and Lys120 each bind 3-methyl-2-oxobutanoate. Residue Glu122 coordinates Mg(2+). The Proton acceptor role is filled by Glu189.

This sequence belongs to the PanB family. In terms of assembly, homodecamer; pentamer of dimers. The cofactor is Mg(2+).

It localises to the cytoplasm. The enzyme catalyses 3-methyl-2-oxobutanoate + (6R)-5,10-methylene-5,6,7,8-tetrahydrofolate + H2O = 2-dehydropantoate + (6S)-5,6,7,8-tetrahydrofolate. The protein operates within cofactor biosynthesis; (R)-pantothenate biosynthesis; (R)-pantoate from 3-methyl-2-oxobutanoate: step 1/2. In terms of biological role, catalyzes the reversible reaction in which hydroxymethyl group from 5,10-methylenetetrahydrofolate is transferred onto alpha-ketoisovalerate to form ketopantoate. This is 3-methyl-2-oxobutanoate hydroxymethyltransferase 2 from Burkholderia lata (strain ATCC 17760 / DSM 23089 / LMG 22485 / NCIMB 9086 / R18194 / 383).